Reading from the N-terminus, the 501-residue chain is DNA nucleotidylexotransferase (501 aa).

The Nuclear localization signal motif lies at 11–17 (KKRKRPV). Residues 24–121 (QVEVKFKEVT…RPVRVETRHS (98 aa)) form the BRCT domain. Positions 249 to 253 (VGPKT) are involved in DNA binding. A 2'-deoxyribonucleoside 5'-triphosphate-binding positions include 324–329 (GFRRGK) and 333–336 (HDVD). The Mg(2+) site is built by D334, D336, and D426. A 2'-deoxyribonucleoside 5'-triphosphate is bound at residue 441-442 (GW).

The protein belongs to the DNA polymerase type-X family. Requires Mg(2+) as cofactor.

It localises to the nucleus. It catalyses the reaction DNA(n) + a 2'-deoxyribonucleoside 5'-triphosphate = DNA(n+1) + diphosphate. In terms of biological role, template-independent DNA polymerase which catalyzes the random addition of deoxynucleoside 5'-triphosphate to the 3'-end of a DNA initiator. One of the in vivo functions of this enzyme is the addition of nucleotides at the junction (N region) of rearranged Ig heavy chain and T-cell receptor gene segments during the maturation of B- and T-cells. The polypeptide is DNA nucleotidylexotransferase (dntt) (Oncorhynchus mykiss (Rainbow trout)).